A 231-amino-acid chain; its full sequence is MSKLTKRQKTIGDKIDSNKLYALSDAIGLVKEFAVAKFDESIDVAVQLGIDAKKSDQVVRGAVVLPNGTGKTKRVAVFAQGAKAEEAKAAGADIVGMDDLAAEIKAGKMDFDVVIASPDAMRIVGTLGQILGPRGLMPNPKVGTVTPDVATAVKNAKAGQVQFRVDKAGIVHGTIGRRSFDTAKLQGNLAALIDALQKAKPASSKGVYLKKVAVSSTMGVGVRVDTQTIAA.

It belongs to the universal ribosomal protein uL1 family. As to quaternary structure, part of the 50S ribosomal subunit.

Its function is as follows. Binds directly to 23S rRNA. The L1 stalk is quite mobile in the ribosome, and is involved in E site tRNA release. Protein L1 is also a translational repressor protein, it controls the translation of the L11 operon by binding to its mRNA. In Polaromonas sp. (strain JS666 / ATCC BAA-500), this protein is Large ribosomal subunit protein uL1.